Reading from the N-terminus, the 804-residue chain is Probable replication endonuclease from prophage-like region 2 (804 aa).

Active-site O-(5'-phospho-DNA)-tyrosine intermediate residues include Tyr-503 and Tyr-507.

Belongs to the phage GPA family.

Functionally, possible endonuclease which induces a single-strand cut and initiates DNA replication. The chain is Probable replication endonuclease from prophage-like region 2 from Salmonella typhi.